We begin with the raw amino-acid sequence, 2280 residues long: Metacaspase-3 (2280 aa).

Disordered regions lie at residues 56-83, 202-284, 791-819, 931-954, 994-1015, 1278-1306, and 1469-1500; these read ILSK…DRED, YSTE…THRG, YKNS…MVNN, DDNS…RYDK, SGKY…DDSE, KTNN…NPFI, and KAPT…NANA. Positions 63–83 are enriched in basic and acidic residues; that stretch reads NKNENIKKRINEKDNDTDRED. 2 stretches are compositionally biased toward polar residues: residues 205 to 219 and 228 to 278; these read EHTQ…TSKR and DKAQ…NRKG. Low complexity-rich tracts occupy residues 793 to 819 and 931 to 941; these read NSMN…MVNN and DDNSVQDSFFS. 2 stretches are compositionally biased toward low complexity: residues 1278 to 1303 and 1482 to 1500; these read KTNN…NNSN and APTN…NANA.

The protein belongs to the peptidase C14B family.

Functionally, protease that cleaves specifically after arginine or lysine residues. The chain is Metacaspase-3 from Plasmodium falciparum (isolate 3D7).